We begin with the raw amino-acid sequence, 65 residues long: Protein C' (65 aa).

This sequence belongs to the rhabdoviruses C protein family.

Its function is as follows. Seems to stimulates transcription by the viral polymerase. May play a role in viral pathogenesis or transmission by insects vectors. This Aedes (Bovine) protein is Protein C' (P).